Consider the following 117-residue polypeptide: Thioredoxin (117 aa).

Residues 2-116 (AISLTEEDFV…FENIIKDFFG (115 aa)) form the Thioredoxin domain. An intrachain disulfide couples Cys40 to Cys43.

This sequence belongs to the thioredoxin family.

In terms of biological role, participates in various redox reactions through the reversible oxidation of its active center dithiol to a disulfide and catalyzes dithiol-disulfide exchange reactions. The polypeptide is Thioredoxin (trxA) (Borreliella burgdorferi (strain ATCC 35210 / DSM 4680 / CIP 102532 / B31) (Borrelia burgdorferi)).